We begin with the raw amino-acid sequence, 660 residues long: DNA ligase (660 aa).

NAD(+) is bound by residues 33–37 (DFVYD), 82–83 (SL), and E110. K112 functions as the N6-AMP-lysine intermediate in the catalytic mechanism. NAD(+) contacts are provided by R133, E167, K281, and K305. The Zn(2+) site is built by C396, C399, C412, and C417. Positions 583–660 (GENKLLAGKK…SFEDIKSYLD (78 aa)) constitute a BRCT domain.

This sequence belongs to the NAD-dependent DNA ligase family. LigA subfamily. The cofactor is Mg(2+). It depends on Mn(2+) as a cofactor.

It catalyses the reaction NAD(+) + (deoxyribonucleotide)n-3'-hydroxyl + 5'-phospho-(deoxyribonucleotide)m = (deoxyribonucleotide)n+m + AMP + beta-nicotinamide D-nucleotide.. DNA ligase that catalyzes the formation of phosphodiester linkages between 5'-phosphoryl and 3'-hydroxyl groups in double-stranded DNA using NAD as a coenzyme and as the energy source for the reaction. It is essential for DNA replication and repair of damaged DNA. This Borreliella burgdorferi (strain ZS7) (Borrelia burgdorferi) protein is DNA ligase.